We begin with the raw amino-acid sequence, 168 residues long: MPLHVSLANGNRDLDYDSVQPYFMCDDEEEDVHQQPPQPPAPSEDIWKKFELLPTPRPSPGHPGLYSPPCEAVAASFSPRDHDGDSFSTADLPELPGDAVKQSFVCDPDDETFVKNIILQDCMWNGFSASAKLVSKLDPYQAVRKEGASVSPAADVEPATPPDCTCNT.

Disordered stretches follow at residues 26 to 94 (DDEE…DLPE) and 146 to 168 (EGASVSPAADVEPATPPDCTCNT). Residues S59 and S67 each carry the phosphoserine modification.

The protein localises to the nucleus. Functionally, seems to act as an inhibitor of cellular proliferation. In Rattus norvegicus (Rat), this protein is Protein B-Myc (Mycb).